We begin with the raw amino-acid sequence, 297 residues long: Alpha/beta-gliadin A-IV (297 aa).

Positions methionine 1–alanine 20 are cleaved as a signal peptide. A compositionally biased stretch (low complexity) spans glutamine 29 to glutamine 55. Disordered stretches follow at residues glutamine 29–glutamine 127 and glutamine 234–proline 257. Pro residues predominate over residues proline 56–glutamine 67. Residues proline 68 to proline 80 show a composition bias toward low complexity. Residues phenylalanine 81–phenylalanine 101 show a composition bias toward pro residues. 2 stretches are compositionally biased toward low complexity: residues arginine 102–glutamine 127 and glutamine 234–glutamine 250.

This sequence belongs to the gliadin/glutenin family. In terms of processing, substrate of transglutaminase.

Gliadin is the major seed storage protein in wheat. The polypeptide is Alpha/beta-gliadin A-IV (Triticum aestivum (Wheat)).